The primary structure comprises 564 residues: Urocanate hydratase (564 aa).

NAD(+)-binding positions include 58 to 59 (GG), glutamine 136, 182 to 184 (GMG), glutamate 202, arginine 207, 245 to 246 (NA), 266 to 270 (QTSAH), 276 to 277 (YL), and tyrosine 325. Cysteine 413 is a catalytic residue. Glycine 495 is an NAD(+) binding site.

This sequence belongs to the urocanase family. The cofactor is NAD(+).

It is found in the cytoplasm. It catalyses the reaction 4-imidazolone-5-propanoate = trans-urocanate + H2O. It functions in the pathway amino-acid degradation; L-histidine degradation into L-glutamate; N-formimidoyl-L-glutamate from L-histidine: step 2/3. Functionally, catalyzes the conversion of urocanate to 4-imidazolone-5-propionate. This chain is Urocanate hydratase, found in Vibrio atlanticus (strain LGP32) (Vibrio splendidus (strain Mel32)).